The chain runs to 156 residues: MSIRVIYPGTFDPITNGHLDLLSRACALFDHVILAIAESPNKKTLFSLNERVDLAKGATAHLNNIEVTSFHGLLIHFAQQKNIPILLRGIRSLSDFEQEWQLCHMNHRIMPELETLFLMPSEKWAFISSSLVKEIAQYRGDVSAFVPDCVKEALLR.

T10 serves as a coordination point for substrate. ATP-binding positions include 10–11 (TF) and H18. 3 residues coordinate substrate: K42, L74, and R88. ATP contacts are provided by residues 89–91 (GIR), E99, and 124–130 (WAFISSS).

Belongs to the bacterial CoaD family. In terms of assembly, homohexamer. Mg(2+) is required as a cofactor.

The protein resides in the cytoplasm. The enzyme catalyses (R)-4'-phosphopantetheine + ATP + H(+) = 3'-dephospho-CoA + diphosphate. It participates in cofactor biosynthesis; coenzyme A biosynthesis; CoA from (R)-pantothenate: step 4/5. Reversibly transfers an adenylyl group from ATP to 4'-phosphopantetheine, yielding dephospho-CoA (dPCoA) and pyrophosphate. The polypeptide is Phosphopantetheine adenylyltransferase (Hamiltonella defensa subsp. Acyrthosiphon pisum (strain 5AT)).